Reading from the N-terminus, the 148-residue chain is NTR domain-containing protein (148 aa).

The signal sequence occupies residues 1 to 26; it reads MVCRFSYVQVVLILVVLSVIISWANA. 3 disulfides stabilise this stretch: cysteine 27–cysteine 96, cysteine 29–cysteine 122, and cysteine 40–cysteine 146. One can recognise an NTR domain in the interval 27–146; it reads CSCFPPDETR…LQLFNDPQWC (120 aa).

As to expression, prismatic layer of shell (at protein level). Expressed primarily in the mantle with highest level in the mantle edge and lower level in the mantle pallium.

The protein resides in the secreted. The chain is NTR domain-containing protein from Margaritifera margaritifera (Freshwater pearl mussel).